The primary structure comprises 483 residues: Glutathione reductase (483 aa).

Methionine 1 carries the N-acetylmethionine modification. An N-acetylserine modification is found at leucine 2. 2 residues coordinate FAD: serine 33 and glycine 34. Position 33 (serine 33) interacts with glutathione. Arginine 40 is a binding site for glutathione. 4 residues coordinate FAD: glutamate 53, threonine 60, cysteine 61, and lysine 69. Cysteine 61 and cysteine 66 are oxidised to a cystine. Tyrosine 123 contributes to the glutathione binding site. Residue alanine 139 coordinates FAD. Residues alanine 205, isoleucine 208, glutamate 211, arginine 228, and arginine 234 each coordinate NADP(+). Threonine 243 is a binding site for glutathione. An N-linked (GlcNAc...) asparagine glycan is attached at asparagine 278. Glycine 294 is a binding site for NADP(+). Position 334 (aspartate 334) interacts with FAD. Glutamate 340 serves as a coordination point for NADP(+). Position 342 (threonine 342) interacts with FAD. A glutathione-binding site is contributed by arginine 350. Valine 375 is an NADP(+) binding site. Lysine 425 contacts glutathione. Residue histidine 472 coordinates FAD. Catalysis depends on histidine 472, which acts as the Proton acceptor.

It belongs to the class-I pyridine nucleotide-disulfide oxidoreductase family. Homodimer. It depends on FAD as a cofactor.

Its subcellular location is the cytoplasm. The protein localises to the nucleus. It localises to the mitochondrion. It is found in the peroxisome. It carries out the reaction 2 glutathione + NADP(+) = glutathione disulfide + NADPH + H(+). Functionally, catalyzes the reduction of glutathione disulfide (GSSG) to reduced glutathione (GSH). Constitutes the major mechanism to maintain a high GSH:GSSG ratio in the cytosol. The chain is Glutathione reductase from Saccharomyces cerevisiae (strain ATCC 204508 / S288c) (Baker's yeast).